A 407-amino-acid polypeptide reads, in one-letter code: Succinyl-diaminopimelate desuccinylase (407 aa).

The segment covering 1–10 has biased composition (polar residues); it reads MSDIDNNLTS. Residues 1–20 are disordered; sequence MSDIDNNLTSQTHQQATHQQ. Over residues 11–20 the composition is skewed to low complexity; it reads QTHQQATHQQ. Position 93 (His-93) interacts with Zn(2+). Residue Asp-95 is part of the active site. Asp-126 serves as a coordination point for Zn(2+). Glu-160 (proton acceptor) is an active-site residue. Zn(2+) contacts are provided by Glu-161, Glu-189, and His-379.

It belongs to the peptidase M20A family. DapE subfamily. Homodimer. Zn(2+) serves as cofactor. The cofactor is Co(2+).

It catalyses the reaction N-succinyl-(2S,6S)-2,6-diaminopimelate + H2O = (2S,6S)-2,6-diaminopimelate + succinate. The protein operates within amino-acid biosynthesis; L-lysine biosynthesis via DAP pathway; LL-2,6-diaminopimelate from (S)-tetrahydrodipicolinate (succinylase route): step 3/3. Its function is as follows. Catalyzes the hydrolysis of N-succinyl-L,L-diaminopimelic acid (SDAP), forming succinate and LL-2,6-diaminopimelate (DAP), an intermediate involved in the bacterial biosynthesis of lysine and meso-diaminopimelic acid, an essential component of bacterial cell walls. The sequence is that of Succinyl-diaminopimelate desuccinylase from Psychrobacter arcticus (strain DSM 17307 / VKM B-2377 / 273-4).